The primary structure comprises 693 residues: Heat shock protein homolog SSE1 (693 aa).

Ser-2 carries the N-acetylserine modification. A Glycyl lysine isopeptide (Lys-Gly) (interchain with G-Cter in ubiquitin) cross-link involves residue Lys-195. Thr-242 is subject to Phosphothreonine. The interval 653 to 693 (IRSKQEASQMAAMAEKLAAQRKAEAEKKEEKKDTEGDVDMD) is disordered. The residue at position 660 (Ser-660) is a Phosphoserine. Residues 673-687 (RKAEAEKKEEKKDTE) show a composition bias toward basic and acidic residues.

Belongs to the heat shock protein 70 family.

Its subcellular location is the cytoplasm. Its function is as follows. Has a calcium-dependent calmodulin-binding activity. Required for normal growth at various temperatures. This Saccharomyces cerevisiae (strain ATCC 204508 / S288c) (Baker's yeast) protein is Heat shock protein homolog SSE1 (SSE1).